The chain runs to 210 residues: Large ribosomal subunit protein uL3 (210 aa).

It belongs to the universal ribosomal protein uL3 family. In terms of assembly, part of the 50S ribosomal subunit. Forms a cluster with proteins L14 and L19.

In terms of biological role, one of the primary rRNA binding proteins, it binds directly near the 3'-end of the 23S rRNA, where it nucleates assembly of the 50S subunit. The sequence is that of Large ribosomal subunit protein uL3 from Geobacter metallireducens (strain ATCC 53774 / DSM 7210 / GS-15).